We begin with the raw amino-acid sequence, 270 residues long: Protein MGF 110-1L (270 aa).

The signal sequence occupies residues 1–26 (MLGLQIITLLFIPTLLYAYELEPLER). One copy of the A repeat lies at 1-146 (MLGLQIITLL…YIRKRSLQTI (146 aa)). The N-linked (GlcNAc...) asparagine; by host glycan is linked to Asn-75. 2 consecutive transmembrane segments (helical) span residues 118–138 (WQKLLTYGFYLVGCVLVVNYI) and 146–166 (IVYLLVLLVIFFLLSQLMLYR). The stretch at 147 to 270 (VYLLVLLVIF…DNLMKKQDIM (124 aa)) is one B repeat.

It belongs to the asfivirus MGF 110 family.

The protein resides in the membrane. Its function is as follows. Plays a role in virus cell tropism, and may be required for efficient virus replication in macrophages. The protein is Protein MGF 110-1L of Ornithodoros (relapsing fever ticks).